The primary structure comprises 430 residues: Glycine reductase complex component B subunits alpha and beta (430 aa).

Cys242 acts as the Schiff-base intermediate with substrate; via pyruvic acid in catalysis. Pyruvic acid (Cys) is present on Cys242.

As to quaternary structure, heterohexamer of two alpha, two beta and two gamma subunits. Component of the glycine reductase complex, together with components A and C. PB is substrate specific. Post-translationally, the peptide chain is cleaved into beta and alpha chains, and the alpha chain N-terminal cysteine is deaminated and oxidized to form a reactive pyruvoyl group.

The catalysed reaction is acetyl phosphate + [thioredoxin]-disulfide + NH4(+) + H2O = [thioredoxin]-dithiol + glycine + phosphate + H(+). Functionally, in the first step of glycine reductase, the substrate is bound to component PB via a Schiff base intermediate. Then the PB-activated substrate is nucleophilically attacked by the selenol anion of component PA to transform it to a carboxymethylated selenoether and the respective amine. By action of component PC, acetyl phosphate is formed, leaving component PA in its oxidized state. Finally component PA becomes reduced by the thioredoxin system to start a new catalytic cycle of reductive deamination. The protein is Glycine reductase complex component B subunits alpha and beta (grdE) of Acetoanaerobium sticklandii (strain ATCC 12662 / DSM 519 / JCM 1433 / CCUG 9281 / NCIMB 10654 / HF) (Clostridium sticklandii).